The following is a 4545-amino-acid chain: Prolow-density lipoprotein receptor-related protein 1 (4545 aa).

The N-terminal stretch at 1–19 is a signal peptide; the sequence is MLTPPLLLLLPLLSALVAG. The Extracellular segment spans residues 20-4424; sequence ATMDAPKTCS…SQQQPGHMTS (4405 aa). LDL-receptor class A domains lie at 27–66 and 72–110; these read TCSP…EICP and RCPP…AHCR. Intrachain disulfides connect Cys28/Cys41, Cys35/Cys54, Cys48/Cys65, Cys73/Cys86, Cys80/Cys99, and Cys93/Cys109. 5 N-linked (GlcNAc...) asparagine glycosylation sites follow: Asn115, Asn137, Asn186, Asn240, and Asn275. LDL-receptor class B repeat units follow at residues 293-335, 336-379, and 380-423; these read GNFY…DPAM, GKVF…DLVS, and RLVY…FENY. N-linked (GlcNAc...) asparagine glycosylation occurs at Asn358. Asn447 is a glycosylation site (N-linked (GlcNAc...) asparagine). 4 LDL-receptor class B repeats span residues 572-614, 615-660, 661-711, and 712-755; these read GFIY…DWMG, DNLY…DPLN, GWMY…DIPA, and GRLY…HGNY. Residues 639–671 form an HAT 1 repeat; it reads TRKTLIEGKMTHPRAIVVDPLNGWMYWTDWEED. N-linked (GlcNAc...) asparagine glycosylation is present at Asn730. LDL-receptor class A domains lie at 854 to 892, 895 to 933, 936 to 973, 976 to 1013, 1015 to 1053, 1062 to 1099, 1104 to 1142, and 1145 to 1184; these read QCQP…ALCH, TCPS…ATCS, TCPP…ASCA, TCFP…AGCS, SCSS…ANCT, GCHS…KGCE, VCDP…ENCE, and ACRP…ELCD. 24 disulfides stabilise this stretch: Cys855–Cys867, Cys862–Cys880, Cys874–Cys891, Cys896–Cys908, Cys903–Cys921, Cys915–Cys932, Cys937–Cys949, Cys944–Cys962, Cys956–Cys972, Cys977–Cys990, Cys985–Cys1003, Cys997–Cys1012, Cys1016–Cys1028, Cys1023–Cys1041, Cys1035–Cys1052, Cys1063–Cys1076, Cys1070–Cys1089, Cys1083–Cys1098, Cys1105–Cys1119, Cys1113–Cys1132, Cys1126–Cys1141, Cys1146–Cys1160, Cys1153–Cys1173, and Cys1167–Cys1183. Residues Trp872, Asp875, Asp877, Asp879, Asp885, and Glu886 each coordinate Ca(2+). Asn929 is a glycosylation site (N-linked (GlcNAc...) asparagine). Trp1033, Asp1036, Asp1038, Asp1040, Asp1046, and Glu1047 together coordinate Ca(2+). N-linked (GlcNAc...) asparagine glycosylation is present at Asn1051. Ca(2+) is bound by residues Trp1081, Asp1084, Asp1086, Asp1088, Asp1094, and Glu1095. The N-linked (GlcNAc...) asparagine glycan is linked to Asn1156. Residues Asn1196 and Asn1219 are each glycosylated (N-linked (GlcNAc...) asparagine). LDL-receptor class B repeat units follow at residues 1310–1356, 1357–1399, 1400–1446, 1447–1491, and 1492–1532; these read SALY…DWIA, GNIY…DPRD, GILF…DYLE, KRIL…YGGE, and VYWT…YHPS. HAT repeat units lie at residues 1380-1413 and 1470-1503; these read TTLL…SLPR and MEVL…NTLA. N-linked (GlcNAc...) asparagine glycans are attached at residues Asn1512, Asn1559, Asn1576, Asn1617, and Asn1646. 4 LDL-receptor class B repeats span residues 1628–1670, 1671–1714, 1715–1754, and 1755–1799; these read QRVY…DWVS, RNLF…HPLR, GKLY…DFPE, and SKLY…MGDK. The stretch at 1653–1684 is one HAT 4 repeat; it reads VVSADLPNAHGLAVDWVSRNLFWTSYDTNKKQ. N-linked (GlcNAc...) asparagine glycosylation is found at Asn1724, Asn1734, Asn1764, Asn1826, and Asn1934. LDL-receptor class B repeat units follow at residues 1935 to 1977, 1978 to 2020, 2021 to 2064, and 2065 to 2108; these read DTIY…DWIA, GNIY…HPEK, GYLF…DYQG, and GKLY…FEDF. The N-linked (GlcNAc...) asparagine glycan is linked to Asn1996. Lys2010 is subject to N6-acetyllysine. Asn2049 is a glycosylation site (N-linked (GlcNAc...) asparagine). N-linked (GlcNAc...) asparagine glycosylation is found at Asn2118 and Asn2128. LDL-receptor class B repeat units lie at residues 2254–2295, 2296–2344, 2345–2389, 2390–2432, and 2433–2474; these read NRIF…HRGW, DTLY…DECQ, NLMF…DHRA, EKLY…YGEH, and IFWT…VAND. HAT repeat units follow at residues 2277–2309, 2325–2358, and 2411–2444; these read TTIV…STIT, TVIT…LHPS, and HRYV…RAVQ. N-linked (GlcNAc...) asparagine glycosylation is found at Asn2473, Asn2503, and Asn2522. LDL-receptor class A domains follow at residues 2524–2563, 2566–2602, 2605–2641, 2639–2690, 2696–2732, 2734–2771, and 2774–2814; these read SCRA…SYCN, RCKK…IPCN, ACGV…MNCS, NCSA…RDCP, RCPL…THCN, FCSE…AHCE, and TCGP…AGCL. Disulfide bonds link Cys2525/Cys2538, Cys2533/Cys2551, Cys2545/Cys2562, Cys2567/Cys2579, Cys2574/Cys2592, and Cys2586/Cys2601. Asn2602 carries N-linked (GlcNAc...) asparagine glycosylation. 15 cysteine pairs are disulfide-bonded: Cys2606–Cys2618, Cys2613–Cys2631, Cys2625–Cys2640, Cys2640–Cys2667, Cys2645–Cys2680, Cys2674–Cys2689, Cys2697–Cys2709, Cys2704–Cys2722, Cys2716–Cys2731, Cys2735–Cys2747, Cys2742–Cys2760, Cys2754–Cys2770, Cys2775–Cys2788, Cys2782–Cys2801, and Cys2795–Cys2813. Asn2621 and Asn2639 each carry an N-linked (GlcNAc...) asparagine glycan. An N-linked (GlcNAc...) asparagine glycan is attached at Asn2816. LDL-receptor class A domains follow at residues 2818–2855, 2858–2899, and 2904–2941; these read TCDD…PECE, TCGP…PHCT, and KCNA…RGCH. 11 disulfide bridges follow: Cys2819/Cys2831, Cys2826/Cys2844, Cys2838/Cys2854, Cys2859/Cys2871, Cys2866/Cys2885, Cys2879/Cys2898, Cys2905/Cys2918, Cys2913/Cys2931, Cys2925/Cys2940, Cys2987/Cys2997, and Cys2993/Cys3006. Residue Asn2906 is glycosylated (N-linked (GlcNAc...) asparagine). In terms of domain architecture, EGF-like 1; calcium-binding spans 2983–3018; sequence DVDECSTTFPCSQLCINTHGSYKCLCVEGYAPRGGD. 2 N-linked (GlcNAc...) asparagine glycosylation sites follow: Asn3049 and Asn3090. LDL-receptor class B repeat units follow at residues 3070–3114, 3115–3157, 3158–3201, 3202–3244, and 3245–3285; these read QMIY…DWVG, GNLY…DVQN, GYLY…DYVT, ERIY…FEDY, and VYWT…FHAL. HAT repeat units lie at residues 3128 to 3171 and 3224 to 3256; these read EVSK…HSLI and RHVV…KSIN. N-linked (GlcNAc...) asparagine glycosylation is found at Asn3265 and Asn3334. LDL-receptor class A domains follow at residues 3334-3371, 3374-3410, 3413-3450, 3453-3491, 3494-3533, 3536-3572, 3575-3611, 3613-3649, 3654-3692, 3695-3733, and 3741-3778; these read NCTA…PDCP, KCRP…ANCD, VCLP…RDCP, TCAP…ANCT, TCGV…EECD, TCEP…ESCT, PCSE…KDCT, RCDM…EACG, TCPL…EECT, QCPP…EDCE, and HCKD…EDCS. Cystine bridges form between Cys3335–Cys3347, Cys3342–Cys3360, Cys3354–Cys3370, Cys3375–Cys3387, Cys3382–Cys3400, Cys3394–Cys3409, Cys3414–Cys3427, Cys3421–Cys3440, Cys3434–Cys3449, Cys3454–Cys3467, Cys3461–Cys3480, Cys3474–Cys3490, Cys3495–Cys3508, Cys3502–Cys3521, Cys3515–Cys3532, Cys3537–Cys3549, Cys3544–Cys3562, Cys3556–Cys3571, Cys3576–Cys3588, Cys3583–Cys3601, Cys3595–Cys3610, Cys3614–Cys3626, Cys3621–Cys3639, Cys3633–Cys3648, Cys3655–Cys3667, Cys3662–Cys3680, Cys3674–Cys3691, Cys3696–Cys3710, Cys3704–Cys3723, Cys3717–Cys3732, Cys3742–Cys3755, Cys3750–Cys3768, and Cys3762–Cys3777. Asn3489 is a glycosylation site (N-linked (GlcNAc...) asparagine). Asn3663 carries an N-linked (GlcNAc...) asparagine glycan. N-linked (GlcNAc...) asparagine glycosylation is found at Asn3789 and Asn3840. The stretch at 3913–3925 is one LDL-receptor class B 31 repeat; sequence GRVYWTNWHTGTI. Residue Asn3954 is glycosylated (N-linked (GlcNAc...) asparagine). 3 LDL-receptor class B repeats span residues 3971-4013, 4014-4057, and 4058-4102; these read GNVY…DPLR, GTMY…DYHN, and ERLY…FEDY. An HAT 10 repeat occupies 3995–4027; that stretch reads TLISGMIDEPHAIVVDPLRGTMYWSDWGNHPKI. Asn4076, Asn4126, and Asn4180 each carry an N-linked (GlcNAc...) asparagine glycan. 4 EGF-like domains span residues 4197–4230, 4233–4269, 4270–4302, and 4305–4341; these read RPGT…YTGD, ELDQ…PRCT, QQVC…FLGD, and QYRQ…TRCE. 10 cysteine pairs are disulfide-bonded: Cys4201/Cys4211, Cys4205/Cys4221, Cys4237/Cys4247, Cys4241/Cys4257, Cys4259/Cys4268, Cys4273/Cys4283, Cys4277/Cys4293, Cys4309/Cys4319, Cys4313/Cys4329, and Cys4331/Cys4340. The N-linked (GlcNAc...) asparagine glycan is linked to Asn4280. N-linked (GlcNAc...) asparagine glycosylation occurs at Asn4365. The 35-residue stretch at 4376 to 4410 folds into the EGF-like 6 domain; that stretch reads LTCIDHCSNGGSCTMNSKMMPECQCPPHMTGPRCE. 3 disulfides stabilise this stretch: Cys4378-Cys4388, Cys4382-Cys4398, and Cys4400-Cys4409. The helical transmembrane segment at 4425–4445 threads the bilayer; sequence ILIPLLLLLLLLLVAGVVFWY. Topologically, residues 4446–4545 are cytoplasmic; sequence KRRVRGAKGF…PEDEIGDPLA (100 aa). The interval 4446–4545 is interaction with MAFB; it reads KRRVRGAKGF…PEDEIGDPLA (100 aa). Thr4461 is modified (phosphothreonine). Position 4508 is a phosphotyrosine (Tyr4508). 3 positions are modified to phosphoserine: Ser4518, Ser4521, and Ser4524.

This sequence belongs to the LDLR family. In terms of assembly, heterodimer of an 85-kDa membrane-bound carboxyl subunit and a non-covalently attached 515-kDa N-terminal subunit. Intracellular domain interacts with MAFB. Found in a complex with PID1/PCLI1, LRP1 and CUBNI. Interacts with SNX17, PID1/PCLI1, PDGF and CUBN. The intracellular domain interacts with SHC1, GULP1 and DAB1. Can weakly interact (via NPXY motif) with DAB2 (via PID domain); the interaction is enhanced by tyrosine phosphorylation of the NPXY motif. Interacts with MDK; promotes neuronal survival. Interacts with LRPAP1; this interaction is followed by rapid internalization. Interacts with uPA/PLAU and PAI1/SERPINE1, either individually or in complex with each other, leading to rapid endocytosis; this interaction is abolished in the presence of LRPAP1/RAP. Also interacts with tPA/PLAT alone or in complex with SERPINE1. Interacts with the urokinase receptor PLAUR; this interaction leads to PLAUR internalization and is impaired in the presence of SORL1. Interacts with PDGFB. Interacts with TAU/MAPT, leading to endocytosis; this interaction is reduced in the presence of LRPAP1/RAP. Interacts with IGFBP3. Interacts with ADGRG6. In terms of processing, cleaved into a 85 kDa membrane-spanning subunit (LRP-85) and a 515 kDa large extracellular domain (LRP-515) that remains non-covalently associated. Gamma-secretase-dependent cleavage of LRP-85 releases the intracellular domain from the membrane. Post-translationally, phosphorylated on serine and threonine residues. Phosphorylated on tyrosine residues upon stimulation with PDGF. Tyrosine phosphorylation promotes interaction with SHC1.

It is found in the cell membrane. The protein localises to the membrane. Its subcellular location is the coated pit. The protein resides in the golgi outpost. It localises to the cytoplasm. It is found in the cytoskeleton. The protein localises to the microtubule organizing center. Its subcellular location is the nucleus. In terms of biological role, endocytic receptor involved in endocytosis and in phagocytosis of apoptotic cells. Required for early embryonic development. Involved in cellular lipid homeostasis. Involved in the plasma clearance of chylomicron remnants and activated LRPAP1 (alpha 2-macroglobulin), as well as the local metabolism of complexes between plasminogen activators and their endogenous inhibitors. Acts as an LRPAP1 alpha-2-macroglobulin receptor. Acts as a TAU/MAPT receptor and controls the endocytosis of TAU/MAPT as well as its subsequent spread. May modulate cellular events, such as APP metabolism, kinase-dependent intracellular signaling, neuronal calcium signaling as well as neurotransmission. Also acts as a receptor for IGFBP3 to mediate cell growth inhibition. This chain is Prolow-density lipoprotein receptor-related protein 1, found in Rattus norvegicus (Rat).